A 383-amino-acid chain; its full sequence is Acetylornithine deacetylase (383 aa).

His-80 is a Zn(2+) binding site. Asp-82 is a catalytic residue. Position 112 (Asp-112) interacts with Zn(2+). Residue Glu-144 is part of the active site. Residues Glu-145, Glu-169, and His-355 each coordinate Zn(2+).

The protein belongs to the peptidase M20A family. ArgE subfamily. In terms of assembly, homodimer. The cofactor is Zn(2+). Requires Co(2+) as cofactor. It depends on glutathione as a cofactor.

It is found in the cytoplasm. It carries out the reaction N(2)-acetyl-L-ornithine + H2O = L-ornithine + acetate. It participates in amino-acid biosynthesis; L-arginine biosynthesis; L-ornithine from N(2)-acetyl-L-ornithine (linear): step 1/1. Catalyzes the hydrolysis of the amide bond of N(2)-acetylated L-amino acids. Cleaves the acetyl group from N-acetyl-L-ornithine to form L-ornithine, an intermediate in L-arginine biosynthesis pathway, and a branchpoint in the synthesis of polyamines. This chain is Acetylornithine deacetylase, found in Escherichia coli O7:K1 (strain IAI39 / ExPEC).